Consider the following 362-residue polypeptide: Terpene synthase 3 (362 aa).

Residues 90–95 carry the DDxx(x)D/E motif motif; that stretch reads DDFLER. An NDxxSxxxD/E motif motif is present at residues 239–247; sequence NDCVSYAKE.

This sequence belongs to the terpene synthase family.

It carries out the reaction (2E,6E)-farnesyl diphosphate = beta-maaliene + diphosphate. The catalysed reaction is (2E,6E)-farnesyl diphosphate = aristolene + diphosphate. It catalyses the reaction (2E,6E)-farnesyl diphosphate = calarene + diphosphate. The enzyme catalyses (2E)-geranyl diphosphate = (E)-beta-ocimene + diphosphate. It carries out the reaction (2E)-geranyl diphosphate = (Z)-beta-ocimene + diphosphate. The catalysed reaction is (2E)-geranyl diphosphate + H2O = linalool + diphosphate. It catalyses the reaction (2E)-geranyl diphosphate = beta-myrcene + diphosphate. In terms of biological role, terpene synthase that converts its substrate farnesyl diphosphate (FPP) into an unidentified sesquiterpene as a major product, as well as beta-maaliene, aristolene, calarene and 2 additional unidentified sesquiterpene as minor products. Is also able to convert geranyl diphosphate (GPP) into a mixture of monoterpenes including (Z)-beta-ocimene, (E)-beta-ocimene, allo-ocimene, linalool and beta-myrcene. The protein is Terpene synthase 3 of Dictyostelium discoideum (Social amoeba).